Consider the following 41-residue polypeptide: Large ribosomal subunit protein bL36 (41 aa).

This sequence belongs to the bacterial ribosomal protein bL36 family.

The sequence is that of Large ribosomal subunit protein bL36 from Xanthomonas axonopodis pv. citri (strain 306).